A 704-amino-acid chain; its full sequence is Elongation factor G (704 aa).

The tr-type G domain maps to 8–291; it reads VRYRNIGISA…AVVEYLPSPS (284 aa). Residues 17 to 24, 88 to 92, and 142 to 145 contribute to the GTP site; these read AHIDAGKT, DTPGH, and NKMD.

Belongs to the TRAFAC class translation factor GTPase superfamily. Classic translation factor GTPase family. EF-G/EF-2 subfamily.

It is found in the cytoplasm. Its function is as follows. Catalyzes the GTP-dependent ribosomal translocation step during translation elongation. During this step, the ribosome changes from the pre-translocational (PRE) to the post-translocational (POST) state as the newly formed A-site-bound peptidyl-tRNA and P-site-bound deacylated tRNA move to the P and E sites, respectively. Catalyzes the coordinated movement of the two tRNA molecules, the mRNA and conformational changes in the ribosome. The chain is Elongation factor G from Blochmanniella pennsylvanica (strain BPEN).